Consider the following 260-residue polypeptide: Rhythmically expressed gene 2 protein (260 aa).

This chain is Rhythmically expressed gene 2 protein (Reg-2), found in Drosophila melanogaster (Fruit fly).